The following is a 210-amino-acid chain: Redox-sensing transcriptional repressor Rex (210 aa).

The H-T-H motif DNA-binding region spans 15 to 54 (LYYRIFKRFNTDGIEKASSKQIADALGIDSATVRRDFSYF). 89 to 94 (GCGNIG) contributes to the NAD(+) binding site.

This sequence belongs to the transcriptional regulatory Rex family. As to quaternary structure, homodimer.

It is found in the cytoplasm. Functionally, modulates transcription in response to changes in cellular NADH/NAD(+) redox state. The protein is Redox-sensing transcriptional repressor Rex of Streptococcus agalactiae serotype Ia (strain ATCC 27591 / A909 / CDC SS700).